Reading from the N-terminus, the 514-residue chain is Synaptic vesicular amine transporter (514 aa).

Residues 1 to 20 (MALSELALVRWLQESRRSRK) lie on the Cytoplasmic side of the membrane. The chain crosses the membrane as a helical span at residues 21 to 41 (LILFIVFLALLLDNMLLTVVV). The Lumenal, vesicle portion of the chain corresponds to 42–129 (PIIPSYLYSI…EDKDLLNENV (88 aa)). N-linked (GlcNAc...) asparagine glycosylation is found at asparagine 84 and asparagine 91. A disulfide bond links cysteine 117 and cysteine 324. A helical membrane pass occupies residues 130–150 (QVGLLFASKATVQLITNPFIG). Residues 151-159 (LLTNRIGYP) lie on the Cytoplasmic side of the membrane. The helical transmembrane segment at 160–180 (IPIFAGFCIMFVSTIMFAFSS) threads the bilayer. Residues 181 to 189 (SYAFLLIAR) are Lumenal, vesicle-facing. A helical membrane pass occupies residues 190 to 210 (SLQGIGSSCSSVAGMGMLASV). The Cytoplasmic segment spans residues 211–219 (YTDDEERGN). The chain crosses the membrane as a helical span at residues 220–242 (VMGIALGGLAMGVLVGPPFGSVL). Residues leucine 228 and valine 232 each coordinate serotonin. At 243–248 (YEFVGK) the chain is on the lumenal, vesicle side. Residues 249-271 (TAPFLVLAALVLLDGAIQLFVLQ) form a helical membrane-spanning segment. The Cytoplasmic segment spans residues 272–291 (PSRVQPESQKGTPLTTLLKD). A helical membrane pass occupies residues 292–311 (PYILIAAGSICFANMGIAML). Asparagine 305, isoleucine 308, glutamate 312, phenylalanine 334, and tyrosine 341 together coordinate serotonin. Over 312–328 (EPALPIWMMETMCSRKW) the chain is Lumenal, vesicle. A helical transmembrane segment spans residues 329–352 (QLGVAFLPASISYLIGTNIFGILA). Over 353-357 (HKMGR) the chain is Cytoplasmic. A helical transmembrane segment spans residues 358 to 378 (WLCALLGMIIVGVSILCIPFA). At 379-389 (KNIYGLIAPNF) the chain is on the lumenal, vesicle side. A helical transmembrane segment spans residues 390–410 (GVGFAIGMVDSSMMPIMGYLV). Aspartate 399 is a binding site for serotonin. At 411–414 (DLRH) the chain is on the cytoplasmic side. Residues 415-435 (VSVYGSVYAIADVAFCMGYAI) form a helical membrane-spanning segment. Position 433 (tyrosine 433) interacts with serotonin. Residues 436-440 (GPSAG) lie on the Lumenal, vesicle side of the membrane. The helical transmembrane segment at 441 to 462 (GAIAKAIGFPWLMTIIGIIDIL) threads the bilayer. Over 463–514 (FAPLCFFLRSPPAKEEKMAILMDHNCPIKTKMYTQNNIQSYPIGEDEESESD) the chain is Cytoplasmic. Phosphoserine is present on residues serine 511 and serine 513.

The protein belongs to the major facilitator superfamily. Vesicular transporter family. As to quaternary structure, interacts with SLC6A3. Expressed in neuronal and neuroendocrine tissues. Detected in central and peripheral nervous system in particular in axonal and dendritic processes in dopaminergic cells of substantia nigra, histaminergic neuronal cell bodies of substantia nigra and tuberomammillary nucleus, in ganglion cells of sympathetic glia and in peripheral sympathetic nerve terminals in stomach and duodenum (at protein level). Highly expressed in chromaffin cells of the adrenal medulla and histamine-storing enterochromaffin-like cells of oxyntic mucosa (at protein level).

It localises to the cytoplasmic vesicle. It is found in the secretory vesicle. The protein localises to the synaptic vesicle membrane. The protein resides in the secretory vesicle membrane. Its subcellular location is the cell projection. It localises to the axon. It is found in the dendrite. The catalysed reaction is serotonin(in) + 2 H(+)(out) = serotonin(out) + 2 H(+)(in). It carries out the reaction dopamine(in) + 2 H(+)(out) = dopamine(out) + 2 H(+)(in). The enzyme catalyses histamine(in) + 2 H(+)(out) = histamine(out) + 2 H(+)(in). Its activity is regulated as follows. Strongly inhibited by reserpine and tetrabenazine. Also inhibited to a lesser extent by ketanserin and fenfluramine. Reserpine and ketanserin inhibit by blocking the substrate-binding pocket. Tetrabenazine traps SLC18A2/VMAT2 in an occluded conformation and its inhibition is specific to SLC18A2/VMAT2 but not SLC18A1/VMAT1. Electrogenic antiporter that exchanges one cationic monoamine with two intravesicular protons across the membrane of secretory and synaptic vesicles. Uses the electrochemical proton gradient established by the V-type proton-pump ATPase to accumulate high concentrations of monoamines inside the vesicles prior to their release via exocytosis. Transports a variety of catecholamines such as dopamine, adrenaline and noradrenaline, histamine, and indolamines such as serotonin. Regulates the transvesicular monoaminergic gradient that determines the quantal size. Mediates somatodendritic dopamine release in hippocampal neurons, likely as part of a regulated secretory pathway that integrates retrograde synaptic signals. Acts as a primary transporter for striatal dopamine loading ensuring impulse-dependent release of dopamine at the synaptic cleft. Responsible for histamine and serotonin storage and subsequent corelease from mast cell granules. The polypeptide is Synaptic vesicular amine transporter (SLC18A2) (Homo sapiens (Human)).